A 351-amino-acid chain; its full sequence is Ribosomal RNA large subunit methyltransferase M (351 aa).

S-adenosyl-L-methionine-binding positions include Ser183, 216–219, Asp235, Asp255, and Asp271; that span reads APGG. The active-site Proton acceptor is the Lys300.

The protein belongs to the class I-like SAM-binding methyltransferase superfamily. RNA methyltransferase RlmE family. RlmM subfamily. In terms of assembly, monomer.

It localises to the cytoplasm. It carries out the reaction cytidine(2498) in 23S rRNA + S-adenosyl-L-methionine = 2'-O-methylcytidine(2498) in 23S rRNA + S-adenosyl-L-homocysteine + H(+). Its function is as follows. Catalyzes the 2'-O-methylation at nucleotide C2498 in 23S rRNA. The polypeptide is Ribosomal RNA large subunit methyltransferase M (Ectopseudomonas mendocina (strain ymp) (Pseudomonas mendocina)).